A 240-amino-acid chain; its full sequence is Pyridoxine 5'-phosphate synthase (240 aa).

Residue N7 participates in 3-amino-2-oxopropyl phosphate binding. Residue 9-10 (DH) coordinates 1-deoxy-D-xylulose 5-phosphate. R18 is a 3-amino-2-oxopropyl phosphate binding site. The active-site Proton acceptor is H43. 1-deoxy-D-xylulose 5-phosphate-binding residues include R45 and H50. E70 serves as the catalytic Proton acceptor. Residue T100 coordinates 1-deoxy-D-xylulose 5-phosphate. The active-site Proton donor is the H191. Residues G192 and 213-214 (GH) each bind 3-amino-2-oxopropyl phosphate.

This sequence belongs to the PNP synthase family. Homooctamer; tetramer of dimers.

It is found in the cytoplasm. It catalyses the reaction 3-amino-2-oxopropyl phosphate + 1-deoxy-D-xylulose 5-phosphate = pyridoxine 5'-phosphate + phosphate + 2 H2O + H(+). It functions in the pathway cofactor biosynthesis; pyridoxine 5'-phosphate biosynthesis; pyridoxine 5'-phosphate from D-erythrose 4-phosphate: step 5/5. Its function is as follows. Catalyzes the complicated ring closure reaction between the two acyclic compounds 1-deoxy-D-xylulose-5-phosphate (DXP) and 3-amino-2-oxopropyl phosphate (1-amino-acetone-3-phosphate or AAP) to form pyridoxine 5'-phosphate (PNP) and inorganic phosphate. This chain is Pyridoxine 5'-phosphate synthase, found in Acaryochloris marina (strain MBIC 11017).